We begin with the raw amino-acid sequence, 60 residues long: Small ribosomal subunit protein eS31 (60 aa).

4 residues coordinate Zn(2+): C24, C27, C42, and C45. Residues 24–45 (CPRCGPGVFMADHGNRYACGRC) form a C4-type zinc finger.

This sequence belongs to the eukaryotic ribosomal protein eS31 family. In terms of assembly, part of the 30S ribosomal subunit. The cofactor is Zn(2+).

The chain is Small ribosomal subunit protein eS31 from Methanopyrus kandleri (strain AV19 / DSM 6324 / JCM 9639 / NBRC 100938).